A 309-amino-acid chain; its full sequence is (S)-sulfolactate dehydrogenase (309 aa).

NAD(+) is bound by residues 151–152, Asp171, 231–233, and Asp257; these read GI and TAR. Arg233 is a catalytic residue. Residue Glu262 is part of the active site. Residue His281 is the Proton donor of the active site. 281–284 provides a ligand contact to NAD(+); that stretch reads HIAG.

This sequence belongs to the D-isomer specific 2-hydroxyacid dehydrogenase family.

It carries out the reaction (2S)-3-sulfolactate + NAD(+) = 3-sulfopyruvate + NADH + H(+). Functionally, dehydrogenase of the (R,S)-sulfolactate degradation pathway that only acts on the (S)-enantiomer of 3-sulfolactate. Together with ComC, provides a racemase system that converts (2S)-3-sulfolactate to (2R)-3-sulfolactate, which is degraded further by (2R)-sulfolactate sulfo-lyase. Specific for NAD. Also able to form sulfolactate from sulfopyruvate. The sequence is that of (S)-sulfolactate dehydrogenase (slcC) from Chromohalobacter salexigens (strain ATCC BAA-138 / DSM 3043 / CIP 106854 / NCIMB 13768 / 1H11).